We begin with the raw amino-acid sequence, 325 residues long: SPbeta prophage-derived uncharacterized protein YopR (325 aa).

This chain is SPbeta prophage-derived uncharacterized protein YopR (yopR), found in Bacillus subtilis (strain 168).